The primary structure comprises 401 residues: CLIP domain-containing serine protease B9 (401 aa).

The N-terminal stretch at 1-26 (MTSYNRSVAWLTVCVLLALHIGGSHQ) is a signal peptide. Residues 30-85 (QCTTPTRLRGRCISIYECDSILDYFKQRILTWEEREFLRKSQCTGATSGRQPFVCC) enclose the Clip domain. Intrachain disulfides connect Cys31/Cys84, Cys41/Cys72, and Cys47/Cys85. Asn88 carries N-linked (GlcNAc...) asparagine glycosylation. The Peptidase S1 domain maps to 148 to 400 (IYGGQNADID…YMAWVRSNIK (253 aa)). Residues Cys178 and Cys194 are joined by a disulfide bond. Residues His193 and Asp257 each act as charge relay system in the active site. Intrachain disulfides connect Cys322–Cys339 and Cys349–Cys376. Residue Asn330 is glycosylated (N-linked (GlcNAc...) asparagine). Residue Ser353 is the Charge relay system of the active site.

It belongs to the peptidase S1 family. CLIP subfamily. As to quaternary structure, forms a covalent heterodimer with SRPN2; the interaction inhibits CLIPB9 protease activity. Post-translationally, proteolytic cleavage is necessary for activation.

The protein resides in the secreted. Inhibited by serpin SRPN2. Serine protease that functions in the melanization-mediated immune response. Cleaves and activates prophenoloxidase (PPO), which is required for the activation of the prophenoloxidase cascade probably following the recognition of pathogen-derived products. This chain is CLIP domain-containing serine protease B9, found in Anopheles gambiae (African malaria mosquito).